A 631-amino-acid chain; its full sequence is Phosphomethylpyrimidine synthase (631 aa).

Substrate is bound by residues asparagine 239, methionine 268, tyrosine 297, histidine 333, 353-355 (SRG), 394-397 (DGLR), and glutamate 433. Residue histidine 437 coordinates Zn(2+). Tyrosine 460 serves as a coordination point for substrate. Histidine 501 lines the Zn(2+) pocket. Residues cysteine 581, cysteine 584, and cysteine 589 each coordinate [4Fe-4S] cluster.

Belongs to the ThiC family. In terms of assembly, homodimer. It depends on [4Fe-4S] cluster as a cofactor.

The enzyme catalyses 5-amino-1-(5-phospho-beta-D-ribosyl)imidazole + S-adenosyl-L-methionine = 4-amino-2-methyl-5-(phosphooxymethyl)pyrimidine + CO + 5'-deoxyadenosine + formate + L-methionine + 3 H(+). It functions in the pathway cofactor biosynthesis; thiamine diphosphate biosynthesis. Catalyzes the synthesis of the hydroxymethylpyrimidine phosphate (HMP-P) moiety of thiamine from aminoimidazole ribotide (AIR) in a radical S-adenosyl-L-methionine (SAM)-dependent reaction. In Escherichia coli O81 (strain ED1a), this protein is Phosphomethylpyrimidine synthase.